We begin with the raw amino-acid sequence, 83 residues long: Three-finger toxin MALT0058C (83 aa).

The signal sequence occupies residues 1–21; the sequence is MKTLLLTLVVVTIVCLDFGHT. Intrachain disulfides connect Cys-24–Cys-45, Cys-38–Cys-62, Cys-64–Cys-75, and Cys-76–Cys-81.

Belongs to the three-finger toxin family. Short-chain subfamily. Type I alpha-neurotoxin sub-subfamily. Expressed by the venom gland.

The protein resides in the secreted. Its function is as follows. Binds to muscle nicotinic acetylcholine receptor (nAChR) and inhibits acetylcholine from binding to the receptor, thereby impairing neuromuscular transmission. The chain is Three-finger toxin MALT0058C from Micrurus altirostris (Uruguayan coral snake).